A 407-amino-acid polypeptide reads, in one-letter code: Arginine deiminase (407 aa).

Residue cysteine 397 is the Amidino-cysteine intermediate of the active site.

Belongs to the arginine deiminase family.

It is found in the cytoplasm. The catalysed reaction is L-arginine + H2O = L-citrulline + NH4(+). The protein operates within amino-acid degradation; L-arginine degradation via ADI pathway; carbamoyl phosphate from L-arginine: step 1/2. The sequence is that of Arginine deiminase from Vibrio parahaemolyticus serotype O3:K6 (strain RIMD 2210633).